We begin with the raw amino-acid sequence, 337 residues long: Ribosomal RNA small subunit methyltransferase H (337 aa).

S-adenosyl-L-methionine-binding positions include 35 to 37 (GGY), D54, F81, D102, and Q109. The segment at 286–316 (PVGPSEAEAAANPRARSAKLRAGERTDAPAP) is disordered. Over residues 289-300 (PSEAEAAANPRA) the composition is skewed to low complexity.

This sequence belongs to the methyltransferase superfamily. RsmH family.

Its subcellular location is the cytoplasm. The catalysed reaction is cytidine(1402) in 16S rRNA + S-adenosyl-L-methionine = N(4)-methylcytidine(1402) in 16S rRNA + S-adenosyl-L-homocysteine + H(+). In terms of biological role, specifically methylates the N4 position of cytidine in position 1402 (C1402) of 16S rRNA. The chain is Ribosomal RNA small subunit methyltransferase H from Methylobacterium sp. (strain 4-46).